The following is an 89-amino-acid chain: MSLIEKLFGKRQKTASIARERLQIILAHERNGRAEPDYLPQLQQELIAVISKYVKIAPEDIKVQLERQDDLEVLEVNIVLPEPQQRTVA.

This sequence belongs to the MinE family.

Its function is as follows. Prevents the cell division inhibition by proteins MinC and MinD at internal division sites while permitting inhibition at polar sites. This ensures cell division at the proper site by restricting the formation of a division septum at the midpoint of the long axis of the cell. The chain is Cell division topological specificity factor from Laribacter hongkongensis (strain HLHK9).